We begin with the raw amino-acid sequence, 449 residues long: UDP-N-acetylmuramate--L-alanine ligase (449 aa).

113–119 contributes to the ATP binding site; the sequence is GSHGKTT.

Belongs to the MurCDEF family.

It is found in the cytoplasm. The enzyme catalyses UDP-N-acetyl-alpha-D-muramate + L-alanine + ATP = UDP-N-acetyl-alpha-D-muramoyl-L-alanine + ADP + phosphate + H(+). It participates in cell wall biogenesis; peptidoglycan biosynthesis. In terms of biological role, cell wall formation. This chain is UDP-N-acetylmuramate--L-alanine ligase, found in Hydrogenobaculum sp. (strain Y04AAS1).